A 418-amino-acid polypeptide reads, in one-letter code: Lariat debranching enzyme (418 aa).

A divalent metal cation-binding residues include C8, H10, D39, and N84. The lariat recognition loop stretch occupies residues S124–R154. A divalent metal cation is bound by residues H174, H226, and H228. The interval G372 to A418 is disordered. Positions D390 to E406 are enriched in acidic residues. Residues E407–A418 are compositionally biased toward basic and acidic residues.

The protein belongs to the lariat debranching enzyme family. Requires Fe(2+) as cofactor. Zn(2+) serves as cofactor. The cofactor is Mn(2+). Widely expressed. Expressed in roots, stems, cauline and rosette leaves, flower buds and siliques.

The protein localises to the nucleus. With respect to regulation, active in presence of diverse metals including Fe(2+), Zn(2+), Mn(2+). Binds two metal cations in two adjacent alpha and beta metal-binding pockets. Cleaves the 2'-5' phosphodiester linkage at the branch point of lariat intron pre-mRNAs after splicing and converts them into linear molecules that are subsequently degraded. It thereby facilitates ribonucleotide turnover. It may also participate in retrovirus replication via an RNA lariat intermediate in cDNA synthesis. Plays en essential role during embryogenesis. In Arabidopsis thaliana (Mouse-ear cress), this protein is Lariat debranching enzyme (DBR1).